Consider the following 1025-residue polypeptide: Synapsin (1025 aa).

Disordered stretches follow at residues 1 to 94, 439 to 784, 872 to 910, and 995 to 1025; these read MKRG…SRES, VCRP…NYGS, YDSN…KHSD, and DFSD…LDLK. The segment covering 34 to 52 has biased composition (pro residues); it reads TKPPVAGGPPNMPPPPAPG. Low complexity predominate over residues 454 to 463; sequence SRSSVSSRAE. The span at 472–492 shows a compositional bias: pro residues; the sequence is PTPPLPAGPRPAPMGGPPPIP. Composition is skewed to low complexity over residues 499-546 and 594-626; these read VGSI…SSVS and SETS…QFSF. S539 carries the post-translational modification Phosphoserine. The span at 651–673 shows a compositional bias: polar residues; sequence TTASSAVRPESSVSVSDSRNTDT. Basic and acidic residues predominate over residues 690–702; it reads QQERVNPFDKEPS. The segment covering 703–725 has biased composition (low complexity); sequence KSGSAASIHTSSSSSISSSSISS. Positions 726–735 are enriched in polar residues; the sequence is RINRNGNAIQ. Positions 736–749 are enriched in pro residues; sequence SPPPPAGPPPPPPT. Residues 750 to 759 are compositionally biased toward polar residues; that stretch reads NVTAVGSNAN. Over residues 760-772 the composition is skewed to low complexity; sequence SSSGYRNSFSSSL. Residues 872 to 904 show a composition bias toward polar residues; the sequence is YDSNSIASQGEGLNNPSDLPSYTRPSYSRSESN. A compositionally biased stretch (low complexity) spans 995–1007; it reads DFSDSGSMSSIGS.

It belongs to the synapsin family. In terms of assembly, identified in a complex with Syt1 and nwk. In terms of tissue distribution, widely expressed in the embryonic and adult nervous system synaptic terminals.

Its subcellular location is the synapse. Plays a significant role in nervous system function, which is subtle at the cellular level but manifests itself in complex behavior. This chain is Synapsin (Syn), found in Drosophila melanogaster (Fruit fly).